The following is a 485-amino-acid chain: UDP-N-acetylmuramoyl-L-alanyl-D-glutamate--2,6-diaminopimelate ligase (485 aa).

Residues L27 and S29 each contribute to the UDP-N-acetyl-alpha-D-muramoyl-L-alanyl-D-glutamate site. Residue 106-112 participates in ATP binding; it reads GTSGKTS. Residues 148 to 149, S175, Q181, and R183 contribute to the UDP-N-acetyl-alpha-D-muramoyl-L-alanyl-D-glutamate site; that span reads TT. The residue at position 215 (K215) is an N6-carboxylysine. Residues R382, 406–409, G454, and E458 contribute to the meso-2,6-diaminopimelate site; that span reads DNPR. The Meso-diaminopimelate recognition motif signature appears at 406-409; the sequence is DNPR.

This sequence belongs to the MurCDEF family. MurE subfamily. The cofactor is Mg(2+). Post-translationally, carboxylation is probably crucial for Mg(2+) binding and, consequently, for the gamma-phosphate positioning of ATP.

The protein localises to the cytoplasm. It carries out the reaction UDP-N-acetyl-alpha-D-muramoyl-L-alanyl-D-glutamate + meso-2,6-diaminopimelate + ATP = UDP-N-acetyl-alpha-D-muramoyl-L-alanyl-gamma-D-glutamyl-meso-2,6-diaminopimelate + ADP + phosphate + H(+). It participates in cell wall biogenesis; peptidoglycan biosynthesis. Catalyzes the addition of meso-diaminopimelic acid to the nucleotide precursor UDP-N-acetylmuramoyl-L-alanyl-D-glutamate (UMAG) in the biosynthesis of bacterial cell-wall peptidoglycan. This Bradyrhizobium diazoefficiens (strain JCM 10833 / BCRC 13528 / IAM 13628 / NBRC 14792 / USDA 110) protein is UDP-N-acetylmuramoyl-L-alanyl-D-glutamate--2,6-diaminopimelate ligase.